Here is a 545-residue protein sequence, read N- to C-terminus: RAN GTPase-activating protein 2 (545 aa).

The WPP stretch occupies residues 1 to 116 (MADILDSRPH…VAARELISED (116 aa)). 9 LRR repeats span residues 213–236 (GSIL…AFGA), 241–264 (LSSL…AVSE), 269–296 (TENL…VVKR), 325–348 (CTHM…SLSK), 353–380 (FKHM…ALKE), 382–405 (ASPI…AIAA), 410–433 (KQDL…QIAN), 439–462 (HSKL…ALAH), and 467–494 (KEAF…IFKK). Residues 496 to 545 (PELLGALDENDPDGEEDDDDEEDEEDEENEGNGNGELESKLKNLEVNQED) are disordered. Acidic residues predominate over residues 503–525 (DENDPDGEEDDDDEEDEEDEENE).

This sequence belongs to the RNA1 family. In terms of assembly, homodimer. Interacts with WIP1 and WIP2 through its WPP domain. Component of Ran complexes at least composed of WIT1 or WIT2, RANGAP1 or RANGAP2, and WIP1 or WIP2 or WIP3. Interacts with WIT1.

Its subcellular location is the cytoplasm. It localises to the nucleus membrane. It is found in the cytoskeleton. The protein localises to the spindle. The protein resides in the phragmoplast. In terms of biological role, GTPase activator for the nuclear Ras-related regulatory protein Ran, converting it to the putatively inactive GDP-bound state. This is RAN GTPase-activating protein 2 (RANGAP2) from Arabidopsis thaliana (Mouse-ear cress).